We begin with the raw amino-acid sequence, 288 residues long: Sulfur carrier protein FdhD (288 aa).

Cys-122 (cysteine persulfide intermediate) is an active-site residue. Mo-bis(molybdopterin guanine dinucleotide) is bound at residue 268–273 (FVRGER).

The protein belongs to the FdhD family.

It is found in the cytoplasm. Required for formate dehydrogenase (FDH) activity. Acts as a sulfur carrier protein that transfers sulfur from IscS to the molybdenum cofactor prior to its insertion into FDH. The protein is Sulfur carrier protein FdhD of Anaeromyxobacter sp. (strain K).